Consider the following 517-residue polypeptide: zeta-carotene-forming phytoene desaturase (517 aa).

Residue 11 to 44 (VVVGAGVGGLAAAARLAHQGFDVQVFEKTQGPGG) participates in FAD binding.

This sequence belongs to the carotenoid/retinoid oxidoreductase family. FAD is required as a cofactor.

It catalyses the reaction 15-cis-phytoene + 2 A = all-trans-zeta-carotene + 2 AH2. It functions in the pathway carotenoid biosynthesis; lycopene biosynthesis. In terms of biological role, dehydrogenates carotenes in the cis conformation: has cis-to-trans isomerase activity and mediates dehydrogenation of cis-phytoene, producing zeta-carotene via the intermediary of phytofluene by the symmetrical introduction of 2 double bonds at the C-11 and C-11' positions of phytoene. The protein is zeta-carotene-forming phytoene desaturase (carA2) of Myxococcus xanthus.